The sequence spans 874 residues: Alanine--tRNA ligase (874 aa).

Residues His-562, His-566, Cys-665, and His-669 each coordinate Zn(2+).

Belongs to the class-II aminoacyl-tRNA synthetase family. The cofactor is Zn(2+).

The protein localises to the cytoplasm. The enzyme catalyses tRNA(Ala) + L-alanine + ATP = L-alanyl-tRNA(Ala) + AMP + diphosphate. Its function is as follows. Catalyzes the attachment of alanine to tRNA(Ala) in a two-step reaction: alanine is first activated by ATP to form Ala-AMP and then transferred to the acceptor end of tRNA(Ala). Also edits incorrectly charged Ser-tRNA(Ala) and Gly-tRNA(Ala) via its editing domain. The chain is Alanine--tRNA ligase from Pseudomonas savastanoi pv. phaseolicola (strain 1448A / Race 6) (Pseudomonas syringae pv. phaseolicola (strain 1448A / Race 6)).